The following is a 433-amino-acid chain: Alpha-(1,3)-fucosyltransferase 4 (433 aa).

Residues 1-20 are disordered; sequence MAPAGRKLQHESRCRPSRPV. Topologically, residues 1-54 are cytoplasmic; the sequence is MAPAGRKLQHESRCRPSRPVDAWRAAATTRGRCMGTPGARRTARRGGWGLPRTS. Residues 55 to 74 form a helical; Signal-anchor for type II membrane protein membrane-spanning segment; it reads SGLAAAGLLCTALTACLCWG. The Lumenal portion of the chain corresponds to 75–433; sequence QLPPLPWASP…IHNLADWFQR (359 aa). Asn-117 and Asn-218 each carry an N-linked (GlcNAc...) asparagine glycan.

Belongs to the glycosyltransferase 10 family. As to expression, in adult, highest expression in spleen, testis, brain, lung, kidney and skeletal muscle and to a lesser extent in liver and heart.

The protein localises to the golgi apparatus. It is found in the golgi stack membrane. The catalysed reaction is a beta-D-galactosyl-(1-&gt;4)-N-acetyl-beta-D-glucosaminyl derivative + GDP-beta-L-fucose = a beta-D-galactosyl-(1-&gt;4)-[alpha-L-fucosyl-(1-&gt;3)]-N-acetyl-beta-D-glucosaminyl derivative + GDP + H(+). It carries out the reaction an N-acetyl-alpha-neuraminyl-(2-&gt;3)-beta-D-galactosyl-(1-&gt;4)-N-acetyl-beta-D-glucosaminyl derivative + GDP-beta-L-fucose = an alpha-Neu5Ac-(2-&gt;3)-beta-D-Gal-(1-&gt;4)-[alpha-L-Fuc-(1-&gt;3)]-beta-D-GlcNAc derivative + GDP + H(+). It catalyses the reaction an alpha-Neu5Ac-(2-&gt;3)-beta-D-Gal-(1-&gt;4)-beta-D-GlcNAc-(1-&gt;3)-beta-D-Gal-(1-&gt;4)-beta-D-GlcNAc derivative + GDP-beta-L-fucose = an alpha-Neu5Ac-(2-&gt;3)-beta-D-Gal-(1-&gt;4)-beta-D-GlcNAc-(1-&gt;3)-beta-D-Gal-(1-&gt;4)-[alpha-L-Fuc-(1-&gt;3)]-beta-D-GlcNAc derivative + GDP + H(+). The enzyme catalyses an alpha-Neu5Ac-(2-&gt;3)-beta-D-Gal-(1-&gt;4)-beta-D-GlcNAc6S derivative + GDP-beta-L-fucose = an alpha-Neu5Ac-(2-&gt;3)-beta-D-Gal-(1-&gt;4)-[alpha-L-Fuc-(1-&gt;3)]-beta-D-GlcNAc6S derivative + GDP + H(+). It functions in the pathway protein modification; protein glycosylation. Functionally, catalyzes alpha(1-&gt;3) linkage of fucosyl moiety transferred from GDP-beta-L-fucose to N-acetyl glucosamine (GlcNAc) within type 2 lactosamine (LacNAc, Gal-beta(1-&gt;4)GlcNAc) glycan attached to N- or O-linked glycoproteins. Robustly fucosylates nonsialylated distal LacNAc unit of the polylactosamine chain to form Lewis X antigen (CD15), a glycan determinant known to mediate important cellular functions in development and immunity. Fucosylates with lower efficiency sialylated LacNAc acceptors to form sialyl Lewis X and 6-sulfo sialyl Lewis X determinants that serve as recognition epitopes for C-type lectins. Together with FUT7 contributes to SELE, SELL and SELP selectin ligand biosynthesis and selectin-dependent lymphocyte homing, leukocyte migration and blood leukocyte homeostasis. In a cell type specific manner, may also fucosylate the internal LacNAc unit of the polylactosamine chain to form VIM-2 antigen that serves as recognition epitope for SELE. This is Alpha-(1,3)-fucosyltransferase 4 (Fut4) from Rattus norvegicus (Rat).